The chain runs to 319 residues: Ribosomal RNA small subunit methyltransferase H (319 aa).

Residues 39–41, Asp-59, Phe-83, Asp-104, and Gln-111 each bind S-adenosyl-L-methionine; that span reads GGH.

Belongs to the methyltransferase superfamily. RsmH family.

It is found in the cytoplasm. The catalysed reaction is cytidine(1402) in 16S rRNA + S-adenosyl-L-methionine = N(4)-methylcytidine(1402) in 16S rRNA + S-adenosyl-L-homocysteine + H(+). Specifically methylates the N4 position of cytidine in position 1402 (C1402) of 16S rRNA. The sequence is that of Ribosomal RNA small subunit methyltransferase H from Ralstonia pickettii (strain 12D).